Reading from the N-terminus, the 504-residue chain is Cytochrome P450 2D1 (504 aa).

Cys-446 contacts heme.

The protein belongs to the cytochrome P450 family. Requires heme as cofactor.

The protein resides in the endoplasmic reticulum membrane. It localises to the microsome membrane. The enzyme catalyses an organic molecule + reduced [NADPH--hemoprotein reductase] + O2 = an alcohol + oxidized [NADPH--hemoprotein reductase] + H2O + H(+). Its function is as follows. Cytochromes P450 are a group of heme-thiolate monooxygenases. In liver microsomes, this enzyme is involved in an NADPH-dependent electron transport pathway. It oxidizes a variety of structurally unrelated compounds, including steroids, fatty acids, and xenobiotics. The polypeptide is Cytochrome P450 2D1 (Cyp2d1) (Rattus norvegicus (Rat)).